We begin with the raw amino-acid sequence, 299 residues long: MTSIIQSPPLNSKKPHLSQDDRINKNNNNNNKMIFQKRTIADNQIQSPLIGHYKLNNNNNNNNNNNNNNNNNNNNNNNNSSSNNNINNNNLVVDECCEKTEQIETKETITKVEDNLNLEVDVDKEIENEIAKYQHLLSTSTIFNGICQDYTDESDNSDEENVDDDDEEEDNKKQKEECEEEEEEECEEEEEEDSDEDSDDDDSDDSEDSDYVEESILNNCLRQQQQINHNGFMNKKYNYIDTNSYFFSRQQQQQPQKINHIYADTSLRMELIELLTVMKNNEREKGNMVEDVCVHEIFL.

Positions 1-10 (MTSIIQSPPL) are enriched in polar residues. Disordered stretches follow at residues 1–30 (MTSI…NNNN), 54–89 (KLNN…INNN), and 148–212 (QDYT…SDYV). Residues 56 to 89 (NNNNNNNNNNNNNNNNNNNNNNNNSSSNNNINNN) are compositionally biased toward low complexity. 2 stretches are compositionally biased toward acidic residues: residues 150–169 (YTDE…DEEE) and 177–212 (ECEE…SDYV).

This is an uncharacterized protein from Dictyostelium discoideum (Social amoeba).